The primary structure comprises 279 residues: Oxygen-dependent coproporphyrinogen-III oxidase (279 aa).

Ser-102 is a substrate binding site. His-106 and His-116 together coordinate a divalent metal cation. Catalysis depends on His-116, which acts as the Proton donor. 118 to 120 (NTR) lines the substrate pocket. Residues His-149 and His-179 each contribute to the a divalent metal cation site. The segment at 244–279 (YVEFNLLYDRGTKFGLMTDGNVEAILMSLPPEVKFN) is important for dimerization.

It belongs to the aerobic coproporphyrinogen-III oxidase family. Homodimer. The cofactor is a divalent metal cation.

It is found in the cytoplasm. It catalyses the reaction coproporphyrinogen III + O2 + 2 H(+) = protoporphyrinogen IX + 2 CO2 + 2 H2O. It functions in the pathway porphyrin-containing compound metabolism; protoporphyrin-IX biosynthesis; protoporphyrinogen-IX from coproporphyrinogen-III (O2 route): step 1/1. Its function is as follows. Involved in the heme biosynthesis. Catalyzes the aerobic oxidative decarboxylation of propionate groups of rings A and B of coproporphyrinogen-III to yield the vinyl groups in protoporphyrinogen-IX. The protein is Oxygen-dependent coproporphyrinogen-III oxidase of Rickettsia peacockii (strain Rustic).